The chain runs to 310 residues: tRNA-cytidine(32) 2-sulfurtransferase (310 aa).

A PP-loop motif motif is present at residues 47–52 (SGGKDS). 3 residues coordinate [4Fe-4S] cluster: C122, C125, and C213.

The protein belongs to the TtcA family. As to quaternary structure, homodimer. The cofactor is Mg(2+). Requires [4Fe-4S] cluster as cofactor.

The protein localises to the cytoplasm. It carries out the reaction cytidine(32) in tRNA + S-sulfanyl-L-cysteinyl-[cysteine desulfurase] + AH2 + ATP = 2-thiocytidine(32) in tRNA + L-cysteinyl-[cysteine desulfurase] + A + AMP + diphosphate + H(+). It functions in the pathway tRNA modification. In terms of biological role, catalyzes the ATP-dependent 2-thiolation of cytidine in position 32 of tRNA, to form 2-thiocytidine (s(2)C32). The sulfur atoms are provided by the cysteine/cysteine desulfurase (IscS) system. This is tRNA-cytidine(32) 2-sulfurtransferase from Serratia proteamaculans (strain 568).